A 250-amino-acid chain; its full sequence is MSFIAIIPARYASTRLPGKPLADIAGKPMVVHVMERALESGASQVIVATDHPEVVTAVEAAGGEVCLTRADHQSGTERLAEVIERYGFADDQIIVNVQGDEPLVPPEIIRQVAENLAASSAGMATLAVPIESSEEAFNPNAVKVVMDAQGYALYFSRAAIPWERERFAQSKETIGDCFLRHIGIYAYRAGFVRRYVNWAPSQLEQIELLEQLRVLWYGEKIHVAVAKAVPAVGVDTQEDLDRVRAIMLNK.

This sequence belongs to the KdsB family.

It is found in the cytoplasm. The enzyme catalyses 3-deoxy-alpha-D-manno-oct-2-ulosonate + CTP = CMP-3-deoxy-beta-D-manno-octulosonate + diphosphate. The protein operates within nucleotide-sugar biosynthesis; CMP-3-deoxy-D-manno-octulosonate biosynthesis; CMP-3-deoxy-D-manno-octulosonate from 3-deoxy-D-manno-octulosonate and CTP: step 1/1. Its pathway is bacterial outer membrane biogenesis; lipopolysaccharide biosynthesis. In terms of biological role, activates KDO (a required 8-carbon sugar) for incorporation into bacterial lipopolysaccharide in Gram-negative bacteria. This chain is 3-deoxy-manno-octulosonate cytidylyltransferase, found in Yersinia enterocolitica serotype O:8 / biotype 1B (strain NCTC 13174 / 8081).